A 544-amino-acid polypeptide reads, in one-letter code: Chaperonin GroEL 1 (544 aa).

ATP-binding positions include 30-33, K51, 87-91, G415, 479-481, and D495; these read TLGP, DGTTT, and NAA.

It belongs to the chaperonin (HSP60) family. In terms of assembly, forms a cylinder of 14 subunits composed of two heptameric rings stacked back-to-back. Interacts with the co-chaperonin GroES.

It localises to the cytoplasm. The catalysed reaction is ATP + H2O + a folded polypeptide = ADP + phosphate + an unfolded polypeptide.. Its function is as follows. Together with its co-chaperonin GroES, plays an essential role in assisting protein folding. The GroEL-GroES system forms a nano-cage that allows encapsulation of the non-native substrate proteins and provides a physical environment optimized to promote and accelerate protein folding. The protein is Chaperonin GroEL 1 of Vibrio cholerae serotype O1 (strain ATCC 39315 / El Tor Inaba N16961).